The sequence spans 371 residues: Cytochrome b (371 aa).

Transmembrane regions (helical) follow at residues 25 to 45 (FGSM…FLAI), 69 to 90 (WTMQ…YTHI), 105 to 125 (WLSG…GYVL), and 170 to 190 (FFAL…VHII). Heme b contacts are provided by His-75 and His-89. Residues His-174 and His-188 each coordinate heme b. An a ubiquinone-binding site is contributed by His-193. Helical transmembrane passes span 218–238 (YKDM…MSFS), 280–300 (LGGT…PFTH), 312–332 (FTQL…WTAT), and 339–358 (FILI…IINP).

It belongs to the cytochrome b family. The cytochrome bc1 complex contains 3 respiratory subunits (MT-CYB, CYC1 and UQCRFS1), 2 core proteins (UQCRC1 and UQCRC2) and probably 6 low-molecular weight proteins. The cofactor is heme b.

It is found in the mitochondrion inner membrane. In terms of biological role, component of the ubiquinol-cytochrome c reductase complex (complex III or cytochrome b-c1 complex) that is part of the mitochondrial respiratory chain. The b-c1 complex mediates electron transfer from ubiquinol to cytochrome c. Contributes to the generation of a proton gradient across the mitochondrial membrane that is then used for ATP synthesis. The sequence is that of Cytochrome b (MT-CYB) from Elapognathus coronatus (Western crowned snake).